Here is a 264-residue protein sequence, read N- to C-terminus: Pyridoxine 5'-phosphate synthase (264 aa).

Asn-28 contacts 3-amino-2-oxopropyl phosphate. 30-31 (DH) lines the 1-deoxy-D-xylulose 5-phosphate pocket. Residue Arg-39 coordinates 3-amino-2-oxopropyl phosphate. The Proton acceptor role is filled by His-64. The 1-deoxy-D-xylulose 5-phosphate site is built by Arg-66 and His-71. Glu-91 functions as the Proton acceptor in the catalytic mechanism. Thr-121 provides a ligand contact to 1-deoxy-D-xylulose 5-phosphate. Catalysis depends on His-217, which acts as the Proton donor. 3-amino-2-oxopropyl phosphate is bound by residues Gly-218 and 239 to 240 (GH).

This sequence belongs to the PNP synthase family. As to quaternary structure, homooctamer; tetramer of dimers.

It is found in the cytoplasm. The catalysed reaction is 3-amino-2-oxopropyl phosphate + 1-deoxy-D-xylulose 5-phosphate = pyridoxine 5'-phosphate + phosphate + 2 H2O + H(+). Its pathway is cofactor biosynthesis; pyridoxine 5'-phosphate biosynthesis; pyridoxine 5'-phosphate from D-erythrose 4-phosphate: step 5/5. Its function is as follows. Catalyzes the complicated ring closure reaction between the two acyclic compounds 1-deoxy-D-xylulose-5-phosphate (DXP) and 3-amino-2-oxopropyl phosphate (1-amino-acetone-3-phosphate or AAP) to form pyridoxine 5'-phosphate (PNP) and inorganic phosphate. In Psychrobacter arcticus (strain DSM 17307 / VKM B-2377 / 273-4), this protein is Pyridoxine 5'-phosphate synthase.